The following is a 130-amino-acid chain: Cytochrome b-c1 complex subunit 7 (130 aa).

It belongs to the UQCRB/QCR7 family. Component of the ubiquinol-cytochrome c oxidoreductase (cytochrome b-c1 complex, complex III, CIII), a multisubunit enzyme composed of 3 respiratory subunits cytochrome b, cytochrome c1 and Rieske protein, 2 core protein subunits, and additional low-molecular weight protein subunits. The complex exists as an obligatory dimer and forms supercomplexes (SCs) in the inner mitochondrial membrane with cytochrome c oxidase (complex IV, CIV).

The protein resides in the mitochondrion inner membrane. Component of the ubiquinol-cytochrome c oxidoreductase, a multisubunit transmembrane complex that is part of the mitochondrial electron transport chain which drives oxidative phosphorylation. The respiratory chain contains 3 multisubunit complexes succinate dehydrogenase (complex II, CII), ubiquinol-cytochrome c oxidoreductase (cytochrome b-c1 complex, complex III, CIII) and cytochrome c oxidase (complex IV, CIV), that cooperate to transfer electrons derived from NADH and succinate to molecular oxygen, creating an electrochemical gradient over the inner membrane that drives transmembrane transport and the ATP synthase. The cytochrome b-c1 complex catalyzes electron transfer from ubiquinol to cytochrome c, linking this redox reaction to translocation of protons across the mitochondrial inner membrane, with protons being carried across the membrane as hydrogens on the quinol. In the process called Q cycle, 2 protons are consumed from the matrix, 4 protons are released into the intermembrane space and 2 electrons are passed to cytochrome c. This Schistosoma mansoni (Blood fluke) protein is Cytochrome b-c1 complex subunit 7.